The sequence spans 265 residues: Undecaprenyl-diphosphatase (265 aa).

The next 8 membrane-spanning stretches (helical) occupy residues 14-34, 40-60, 79-99, 112-132, 141-161, 182-202, 217-237, and 242-262; these read GLGE…PWLF, SLVF…VYFW, GKLF…GYLF, LLIA…DSIA, MNVF…FPGI, AKFS…VSLL, IGFF…LGIV, and FKIF…FYLL.

Belongs to the UppP family.

The protein resides in the cell membrane. It catalyses the reaction di-trans,octa-cis-undecaprenyl diphosphate + H2O = di-trans,octa-cis-undecaprenyl phosphate + phosphate + H(+). Functionally, catalyzes the dephosphorylation of undecaprenyl diphosphate (UPP). Confers resistance to bacitracin. This Caldicellulosiruptor bescii (strain ATCC BAA-1888 / DSM 6725 / KCTC 15123 / Z-1320) (Anaerocellum thermophilum) protein is Undecaprenyl-diphosphatase.